The chain runs to 356 residues: Malate dehydrogenase, glyoxysomal (356 aa).

The N-terminal 36 residues, 1 to 36 (MEDAAAAARRMERLASHLRPPASQMEESPLLRGSNC), are a transit peptide targeting the glyoxysome. NAD(+) is bound by residues 51–57 (GASGGIG) and aspartate 77. The substrate site is built by arginine 124 and arginine 130. Residues asparagine 137 and 160-162 (ISN) contribute to the NAD(+) site. Substrate is bound by residues asparagine 162 and arginine 196. Residue histidine 220 is the Proton acceptor of the active site. Methionine 271 contributes to the NAD(+) binding site.

Belongs to the LDH/MDH superfamily. MDH type 1 family. Homodimer.

The protein resides in the glyoxysome. It catalyses the reaction (S)-malate + NAD(+) = oxaloacetate + NADH + H(+). This is Malate dehydrogenase, glyoxysomal from Oryza sativa subsp. japonica (Rice).